The primary structure comprises 339 residues: Phenylalanine--tRNA ligase alpha subunit (339 aa).

E254 contacts Mg(2+).

Belongs to the class-II aminoacyl-tRNA synthetase family. Phe-tRNA synthetase alpha subunit type 1 subfamily. In terms of assembly, tetramer of two alpha and two beta subunits. It depends on Mg(2+) as a cofactor.

It localises to the cytoplasm. The catalysed reaction is tRNA(Phe) + L-phenylalanine + ATP = L-phenylalanyl-tRNA(Phe) + AMP + diphosphate + H(+). The chain is Phenylalanine--tRNA ligase alpha subunit from Clostridium perfringens (strain ATCC 13124 / DSM 756 / JCM 1290 / NCIMB 6125 / NCTC 8237 / Type A).